An 81-amino-acid polypeptide reads, in one-letter code: MKQGIHPDYHPVVFEDSSTGYKFLSGSTATSSETVKWEDGNEYPLIRVEVTSDSHPFYTGKQKFTQADGAVDKFNKKYGLK.

Belongs to the bacterial ribosomal protein bL31 family. Type B subfamily. Part of the 50S ribosomal subunit.

In Limosilactobacillus reuteri (strain DSM 20016) (Lactobacillus reuteri), this protein is Large ribosomal subunit protein bL31B.